A 382-amino-acid chain; its full sequence is Alanine racemase 1 (382 aa).

The active-site Proton acceptor; specific for D-alanine is Lys-39. An N6-(pyridoxal phosphate)lysine modification is found at Lys-39. Position 138 (Arg-138) interacts with substrate. The Proton acceptor; specific for L-alanine role is filled by Tyr-265. Substrate is bound at residue Met-312.

Belongs to the alanine racemase family. Pyridoxal 5'-phosphate is required as a cofactor.

It catalyses the reaction L-alanine = D-alanine. It functions in the pathway amino-acid biosynthesis; D-alanine biosynthesis; D-alanine from L-alanine: step 1/1. Its function is as follows. Catalyzes the interconversion of L-alanine and D-alanine. May also act on other amino acids. The chain is Alanine racemase 1 (alr1) from Staphylococcus aureus (strain MRSA252).